The chain runs to 292 residues: Glycine--tRNA ligase alpha subunit (292 aa).

Belongs to the class-II aminoacyl-tRNA synthetase family. In terms of assembly, tetramer of two alpha and two beta subunits.

Its subcellular location is the cytoplasm. The enzyme catalyses tRNA(Gly) + glycine + ATP = glycyl-tRNA(Gly) + AMP + diphosphate. This chain is Glycine--tRNA ligase alpha subunit, found in Buchnera aphidicola subsp. Schizaphis graminum (strain Sg).